A 138-amino-acid polypeptide reads, in one-letter code: Putative pre-16S rRNA nuclease (138 aa).

It belongs to the YqgF nuclease family.

It localises to the cytoplasm. Its function is as follows. Could be a nuclease involved in processing of the 5'-end of pre-16S rRNA. This is Putative pre-16S rRNA nuclease from Flavobacterium johnsoniae (strain ATCC 17061 / DSM 2064 / JCM 8514 / BCRC 14874 / CCUG 350202 / NBRC 14942 / NCIMB 11054 / UW101) (Cytophaga johnsonae).